Consider the following 307-residue polypeptide: MEFVFLGTGAGVPSKGRNVSAIALQLLEERGQTWLFDCGEATQHQILHTSVRPRRIEKIFITHLHGDHIFGLPGLLGSRSFQGGTTKLTVYGPKGIKQFIEVALLVSTTHVKYPLEIVEITEEGIVFEDNEFCVETKRLSHGIECFGYRIVEKDIQGALLVDKLLGMGVKPGPVFKRLKDGEVVELENGTVLDGKDFIGPPQKGRVITILGDTRYCEASRELAQDADVLVHEATFAAEDEQQAYDYFHSTSKQAASIALQANAKRLILTHISSRYQGDTYKELLKEARELFSNTEIATDLKSFPVER.

Zn(2+) contacts are provided by His63, His65, Asp67, His68, His141, Asp212, and His270. The Proton acceptor role is filled by Asp67.

Belongs to the RNase Z family. In terms of assembly, homodimer. Zn(2+) serves as cofactor.

It carries out the reaction Endonucleolytic cleavage of RNA, removing extra 3' nucleotides from tRNA precursor, generating 3' termini of tRNAs. A 3'-hydroxy group is left at the tRNA terminus and a 5'-phosphoryl group is left at the trailer molecule.. In terms of biological role, zinc phosphodiesterase, which displays some tRNA 3'-processing endonuclease activity. Probably involved in tRNA maturation, by removing a 3'-trailer from precursor tRNA. The polypeptide is Ribonuclease Z (Bacillus mycoides (strain KBAB4) (Bacillus weihenstephanensis)).